The chain runs to 98 residues: NADH-ubiquinone oxidoreductase chain 4L (98 aa).

3 consecutive transmembrane segments (helical) span residues 1–21 (MIPT…GMLT), 27–47 (VASL…TTLI), and 61–81 (IILL…LISI).

It belongs to the complex I subunit 4L family. In terms of assembly, core subunit of respiratory chain NADH dehydrogenase (Complex I) which is composed of 45 different subunits.

The protein resides in the mitochondrion inner membrane. The catalysed reaction is a ubiquinone + NADH + 5 H(+)(in) = a ubiquinol + NAD(+) + 4 H(+)(out). Core subunit of the mitochondrial membrane respiratory chain NADH dehydrogenase (Complex I) which catalyzes electron transfer from NADH through the respiratory chain, using ubiquinone as an electron acceptor. Part of the enzyme membrane arm which is embedded in the lipid bilayer and involved in proton translocation. This Macaca nigra (Celebes black macaque) protein is NADH-ubiquinone oxidoreductase chain 4L (MT-ND4L).